A 261-amino-acid polypeptide reads, in one-letter code: Zinc import ATP-binding protein ZnuC (261 aa).

The 216-residue stretch at I6–N221 folds into the ABC transporter domain. ATP is bound at residue G38–T45.

This sequence belongs to the ABC transporter superfamily. Zinc importer (TC 3.A.1.15.5) family. In terms of assembly, the complex is composed of two ATP-binding proteins (ZnuC), two transmembrane proteins (ZnuB) and a solute-binding protein (ZnuA).

Its subcellular location is the cell inner membrane. The enzyme catalyses Zn(2+)(out) + ATP(in) + H2O(in) = Zn(2+)(in) + ADP(in) + phosphate(in) + H(+)(in). Functionally, part of the ABC transporter complex ZnuABC involved in zinc import. Responsible for energy coupling to the transport system. The polypeptide is Zinc import ATP-binding protein ZnuC (Pseudomonas fluorescens (strain Pf0-1)).